The chain runs to 401 residues: Nicotinamide/nicotinic acid mononucleotide adenylyltransferase 1 (401 aa).

Disordered regions lie at residues 1–30 and 48–123; these read MDPTRAPDFKPPSADEELIPPPDPESKIPK and APFN…RGVQ. The span at 52–69 shows a compositional bias: basic residues; sequence IKRKKKHPKHHHHHHHSR. S91, S95, S96, and S111 each carry phosphoserine. S173 and F174 together coordinate NAD(+). H181 lines the ATP pocket. Residues T253, G288, D290, W301, R320, and N351 each coordinate NAD(+). 356–359 serves as a coordination point for ATP; that stretch reads TKVR.

The protein belongs to the eukaryotic NMN adenylyltransferase family. As to quaternary structure, homotetramer. Ni(2+) is required as a cofactor.

It localises to the cytoplasm. The protein resides in the nucleus. It carries out the reaction beta-nicotinamide D-ribonucleotide + ATP + H(+) = diphosphate + NAD(+). It catalyses the reaction nicotinate beta-D-ribonucleotide + ATP + H(+) = deamido-NAD(+) + diphosphate. Its pathway is cofactor biosynthesis; NAD(+) biosynthesis; deamido-NAD(+) from nicotinate D-ribonucleotide: step 1/1. It participates in cofactor biosynthesis; NAD(+) biosynthesis; NAD(+) from nicotinamide D-ribonucleotide: step 1/1. Catalyzes the formation of NAD(+) from nicotinamide mononucleotide (NMN) and ATP. Can also use the deamidated form; nicotinic acid mononucleotide (NaMN) as substrate to form deamido-NAD(+) (NaAD). Key enzyme in both de novo and salvage pathways for NAD(+) biosynthesis. Predominantly acts in the salvage pathways via NMN. The chain is Nicotinamide/nicotinic acid mononucleotide adenylyltransferase 1 from Saccharomyces cerevisiae (strain ATCC 204508 / S288c) (Baker's yeast).